A 369-amino-acid polypeptide reads, in one-letter code: Deoxyhypusine synthase (369 aa).

Ser78 is modified (phosphoserine). Residues 105–109 (SNLIS), 131–133 (TAG), Glu137, and Asp238 each bind NAD(+). 136 to 137 (EE) contacts spermidine. Asp243 contacts spermidine. Gly283 is an NAD(+) binding site. His288 is a binding site for spermidine. 308–309 (TA) is a binding site for NAD(+). Spermidine contacts are provided by residues 314–316 (GSD) and 323–329 (EAVSWGK). The active-site Nucleophile is Lys329. Residue 342-343 (DA) participates in NAD(+) binding.

Belongs to the deoxyhypusine synthase family. In terms of assembly, homotetramer formed by a dimer of dimers. NAD(+) serves as cofactor.

It catalyses the reaction [eIF5A protein]-L-lysine + spermidine = [eIF5A protein]-deoxyhypusine + propane-1,3-diamine. It functions in the pathway protein modification; eIF5A hypusination. Functionally, catalyzes the NAD-dependent oxidative cleavage of spermidine and the subsequent transfer of the butylamine moiety of spermidine to the epsilon-amino group of a critical lysine residue of the eIF-5A precursor protein to form the intermediate deoxyhypusine residue. This is the first step of the post-translational modification of that lysine into an unusual amino acid residue named hypusine. Hypusination is unique to mature eIF-5A factor and is essential for its function. This Homo sapiens (Human) protein is Deoxyhypusine synthase (DHPS).